A 347-amino-acid polypeptide reads, in one-letter code: N-acetyl-gamma-glutamyl-phosphate reductase (347 aa).

Cys152 is a catalytic residue.

Belongs to the NAGSA dehydrogenase family. Type 1 subfamily.

It localises to the cytoplasm. It catalyses the reaction N-acetyl-L-glutamate 5-semialdehyde + phosphate + NADP(+) = N-acetyl-L-glutamyl 5-phosphate + NADPH + H(+). It functions in the pathway amino-acid biosynthesis; L-arginine biosynthesis; N(2)-acetyl-L-ornithine from L-glutamate: step 3/4. Functionally, catalyzes the NADPH-dependent reduction of N-acetyl-5-glutamyl phosphate to yield N-acetyl-L-glutamate 5-semialdehyde. This is N-acetyl-gamma-glutamyl-phosphate reductase from Neisseria gonorrhoeae (strain ATCC 700825 / FA 1090).